Here is a 174-residue protein sequence, read N- to C-terminus: Myosin regulatory light chain sqh (174 aa).

Thr21 is modified (phosphothreonine). Ser22 carries the post-translational modification Phosphoserine. EF-hand domains lie at 31 to 66 (AQIA…LGKN) and 100 to 135 (DPED…MGDR). 4 residues coordinate Ca(2+): Asp44, Asn46, Asp48, and Asp55.

As to quaternary structure, myosin is a hexamer of 2 heavy chains and 4 light chains. Post-translationally, phosphorylation plays a central role in myosin regulation.

In terms of biological role, required for cytokinesis, could regulate contractile ring function. This chain is Myosin regulatory light chain sqh (sqh), found in Drosophila melanogaster (Fruit fly).